Consider the following 579-residue polypeptide: MKLNYFQGALYPWRFCVIVGLLLAMVGAIVWRIVDLHVIDHDFLKGQGDARSVRHIAIPAHRGLITDRNGEPLAVSTPVTTLWANPKELMTAKERWPQLAAALGQDTKLFADRIEQNAEREFIYLVRGLTPEQGEGVIALKVPGVYSIEEFRRFYPAGEVVAHAVGFTDVDDRGREGIELAFDEWLAGVPGKRQVLKDRRGRVIKDVQVTKNAKPGKTLALSIDLRLQYLAHRELRNALLENGAKAGSLVIMDVKTGEILAMTNQPTYNPNNRRNLQPAAMRNRAMIDVFEPGSTVKPFSMSAALASGRWKPSDIVDVYPGTLQIGRYTIRDVSRNSRQLDLTGILIKSSNVGISKIAFDIGAESIYSVMQQVGLGQDTGLGFPGERVGNLPNHRKWPKAETATLAYGYGLSVTAIQLAHAYAALANDGKSVPLSMTRVDRVPDGVQVISPEVASTVQGMLQQVVEAQGGVFRAQVPGYHAAGKSGTARKVSVGTKGYRENAYRSLFAGFAPATDPRIAMVVVIDEPSKAGYFGGLVSAPVFSKVMAGALRLMNVPPDNLPTATEQQQVNAAPAKGGRG.

The helical transmembrane segment at 15–35 (FCVIVGLLLAMVGAIVWRIVD) threads the bilayer. Ser-294 functions as the Acyl-ester intermediate in the catalytic mechanism. The tract at residues 558–579 (DNLPTATEQQQVNAAPAKGGRG) is disordered. The segment covering 561-570 (PTATEQQQVN) has biased composition (polar residues).

It belongs to the transpeptidase family. FtsI subfamily.

The protein resides in the cell inner membrane. It catalyses the reaction Preferential cleavage: (Ac)2-L-Lys-D-Ala-|-D-Ala. Also transpeptidation of peptidyl-alanyl moieties that are N-acyl substituents of D-alanine.. It participates in cell wall biogenesis; peptidoglycan biosynthesis. Functionally, catalyzes cross-linking of the peptidoglycan cell wall at the division septum. Binds penicillin. This is Peptidoglycan D,D-transpeptidase FtsI from Pseudomonas aeruginosa (strain ATCC 15692 / DSM 22644 / CIP 104116 / JCM 14847 / LMG 12228 / 1C / PRS 101 / PAO1).